Reading from the N-terminus, the 737-residue chain is FYVE, RhoGEF and PH domain-containing protein 3 (737 aa).

Residues 1–151 (MESGGGSSTP…KADKDAGLAQ (151 aa)) are disordered. Acidic residues predominate over residues 126-136 (ADSDVGEEPDS). Ser128 is subject to Phosphoserine. The 185-residue stretch at 157–341 (KLLHIAQELL…STAANHSNAA (185 aa)) folds into the DH domain. A PH 1 domain is found at 370 to 469 (ELIKEGQIQK…WIQIIQATIE (100 aa)). Positions 487-533 (QDEDPSLSPDMPITSTSPVEPVVTTEGGSGAAGLEPRKLSSKTRRDK) are disordered. A compositionally biased stretch (low complexity) spans 500 to 512 (TSTSPVEPVVTTE). Positions 521–533 (EPRKLSSKTRRDK) are enriched in basic and acidic residues. The segment at 532–588 (DKEKQSCKSCGETFNSITKRRHHCKLCGVVICGKCSEFKAENSRQSRVCRECFLTQP) adopts an FYVE-type zinc-finger fold. Residues Cys538, Cys541, Cys555, Cys558, Cys563, Cys566, Cys580, and Cys583 each coordinate Zn(2+). 2 disordered regions span residues 589 to 620 (VAPE…SLLC) and 713 to 737 (AARG…AAAP). Residues 616-715 (PSLLCGPLRL…WLETLSTAAR (100 aa)) enclose the PH 2 domain.

It localises to the cytoplasm. Its subcellular location is the cytoskeleton. Promotes the formation of filopodia. May activate CDC42, a member of the Ras-like family of Rho- and Rac proteins, by exchanging bound GDP for free GTP. Plays a role in regulating the actin cytoskeleton and cell shape. The chain is FYVE, RhoGEF and PH domain-containing protein 3 (FGD3) from Pongo abelii (Sumatran orangutan).